The sequence spans 148 residues: Endoribonuclease YbeY (148 aa).

Residues His113, His117, and His123 each coordinate Zn(2+).

The protein belongs to the endoribonuclease YbeY family. It depends on Zn(2+) as a cofactor.

Its subcellular location is the cytoplasm. In terms of biological role, single strand-specific metallo-endoribonuclease involved in late-stage 70S ribosome quality control and in maturation of the 3' terminus of the 16S rRNA. This is Endoribonuclease YbeY from Borrelia duttonii (strain Ly).